A 429-amino-acid polypeptide reads, in one-letter code: Ribosomal RNA small subunit methyltransferase B (429 aa).

S-adenosyl-L-methionine is bound by residues 254-260 (CAAPGGK), Asp-277, Asp-303, and Asp-322. The active-site Nucleophile is the Cys-375. Positions 397 to 419 (ALSETGTPDQPGQQNLPGGEEGD) are disordered. Over residues 400–412 (ETGTPDQPGQQNL) the composition is skewed to polar residues.

It belongs to the class I-like SAM-binding methyltransferase superfamily. RsmB/NOP family.

It is found in the cytoplasm. The enzyme catalyses cytidine(967) in 16S rRNA + S-adenosyl-L-methionine = 5-methylcytidine(967) in 16S rRNA + S-adenosyl-L-homocysteine + H(+). In terms of biological role, specifically methylates the cytosine at position 967 (m5C967) of 16S rRNA. The protein is Ribosomal RNA small subunit methyltransferase B of Salmonella agona (strain SL483).